A 166-amino-acid polypeptide reads, in one-letter code: Small ribosomal subunit protein uS5 (166 aa).

Residues Leu-11–Val-74 enclose the S5 DRBM domain.

The protein belongs to the universal ribosomal protein uS5 family. In terms of assembly, part of the 30S ribosomal subunit. Contacts proteins S4 and S8.

Its function is as follows. With S4 and S12 plays an important role in translational accuracy. Located at the back of the 30S subunit body where it stabilizes the conformation of the head with respect to the body. This is Small ribosomal subunit protein uS5 from Marinobacter nauticus (strain ATCC 700491 / DSM 11845 / VT8) (Marinobacter aquaeolei).